Reading from the N-terminus, the 93-residue chain is Putative septation protein SpoVG (93 aa).

Belongs to the SpoVG family.

In terms of biological role, could be involved in septation. This Lachnoclostridium phytofermentans (strain ATCC 700394 / DSM 18823 / ISDg) (Clostridium phytofermentans) protein is Putative septation protein SpoVG.